The primary structure comprises 658 residues: NADPH-dependent diflavin oxidoreductase 1 (658 aa).

The region spanning 16 to 160 is the Flavodoxin-like domain; sequence LTILYMTQTG…ELGPWMNRFW (145 aa). FMN is bound by residues 22–27, 69–72, 107–116, and Asp142; these read TQTGTS, STTG, and LGDSTYPRFC. One can recognise an FAD-binding FR-type domain in the interval 215–502; that stretch reads QGWSISILDK…IKPGYLTLPP (288 aa). FAD contacts are provided by residues Arg400, 430-433, and 474-477; these read REFS and GLCT. NADP(+) is bound by residues Thr514, 574–575, and 580–584; these read SR and KTYVQ. An FAD-binding site is contributed by Trp657.

It belongs to the NADPH-dependent diflavin oxidoreductase NDOR1 family. The protein in the N-terminal section; belongs to the flavodoxin family. This sequence in the C-terminal section; belongs to the flavoprotein pyridine nucleotide cytochrome reductase family. In terms of assembly, interacts with DRE2; as part of the cytosolic iron-sulfur (Fe-S) protein assembly (CIA) machinery. The cofactor is FAD. It depends on FMN as a cofactor.

The protein resides in the cytoplasm. Its subcellular location is the mitochondrion. It catalyses the reaction 2 oxidized [2Fe-2S]-[protein] + NADPH = 2 reduced [2Fe-2S]-[protein] + NADP(+) + H(+). Its function is as follows. NADPH-dependent reductase which is a central component of the cytosolic iron-sulfur (Fe-S) protein assembly (CIA) machinery. Transfers electrons from NADPH via its FAD and FMN prosthetic groups to the [2Fe-2S] cluster of DRE2, another key component of the CIA machinery. In turn, this reduced cluster provides electrons for assembly of cytosolic iron-sulfur cluster proteins. Positively controls H(2)O(2)-induced cell death. The chain is NADPH-dependent diflavin oxidoreductase 1 from Mycosarcoma maydis (Corn smut fungus).